A 150-amino-acid polypeptide reads, in one-letter code: Ribosome-binding factor A (150 aa).

The tract at residues 131–150 (LSHDDDEDGGADEAPRNGDE) is disordered.

It belongs to the RbfA family. Monomer. Binds 30S ribosomal subunits, but not 50S ribosomal subunits or 70S ribosomes.

The protein resides in the cytoplasm. One of several proteins that assist in the late maturation steps of the functional core of the 30S ribosomal subunit. Associates with free 30S ribosomal subunits (but not with 30S subunits that are part of 70S ribosomes or polysomes). Required for efficient processing of 16S rRNA. May interact with the 5'-terminal helix region of 16S rRNA. The protein is Ribosome-binding factor A of Brucella melitensis biotype 2 (strain ATCC 23457).